A 427-amino-acid chain; its full sequence is Actin-related protein 3 (427 aa).

The protein belongs to the actin family. ARP3 subfamily. Component of the Arp2/3 complex composed of arp2, act2, arc1/p41-ARC, arc2/p34-ARC, arc3/p21-ARC, arc4/p20-ARC and arc5/p16-ARC.

Its subcellular location is the cytoplasm. The protein localises to the cytoskeleton. It localises to the actin patch. In terms of biological role, functions as ATP-binding component of the Arp2/3 complex which is involved in regulation of actin polymerization and together with an activating nucleation-promoting factor (NPF) mediates the formation of branched actin networks. Seems to contact the pointed end of the daughter actin filament. May be involved in cytokinesis. The polypeptide is Actin-related protein 3 (act2) (Schizosaccharomyces pombe (strain 972 / ATCC 24843) (Fission yeast)).